The sequence spans 152 residues: FAD synthase (152 aa).

ATP is bound by residues 9–10 (TF), 14–17 (HPGH), and Asp-92.

Belongs to the archaeal FAD synthase family. As to quaternary structure, homodimer. A divalent metal cation is required as a cofactor.

It carries out the reaction FMN + ATP + H(+) = FAD + diphosphate. Its pathway is cofactor biosynthesis; FAD biosynthesis; FAD from FMN: step 1/1. Functionally, catalyzes the transfer of the AMP portion of ATP to flavin mononucleotide (FMN) to produce flavin adenine dinucleotide (FAD) coenzyme. The protein is FAD synthase of Ferroglobus placidus (strain DSM 10642 / AEDII12DO).